A 444-amino-acid chain; its full sequence is Tubulin beta-2 chain (444 aa).

GTP-binding residues include glutamine 11, glutamate 69, serine 138, glycine 142, threonine 143, glycine 144, asparagine 204, and asparagine 226. Mg(2+) is bound at residue glutamate 69. Residues 422–444 (YQQYQDATAEEDDYDDGEGSTGD) form a disordered region. The segment covering 429–444 (TAEEDDYDDGEGSTGD) has biased composition (acidic residues).

The protein belongs to the tubulin family. As to quaternary structure, dimer of alpha and beta chains. A typical microtubule is a hollow water-filled tube with an outer diameter of 25 nm and an inner diameter of 15 nM. Alpha-beta heterodimers associate head-to-tail to form protofilaments running lengthwise along the microtubule wall with the beta-tubulin subunit facing the microtubule plus end conferring a structural polarity. Microtubules usually have 13 protofilaments but different protofilament numbers can be found in some organisms and specialized cells. Mg(2+) is required as a cofactor. As to expression, found in areas of rapidly dividing tissues.

It is found in the cytoplasm. The protein localises to the cytoskeleton. Tubulin is the major constituent of microtubules, a cylinder consisting of laterally associated linear protofilaments composed of alpha- and beta-tubulin heterodimers. Microtubules grow by the addition of GTP-tubulin dimers to the microtubule end, where a stabilizing cap forms. Below the cap, tubulin dimers are in GDP-bound state, owing to GTPase activity of alpha-tubulin. In Daucus carota (Wild carrot), this protein is Tubulin beta-2 chain (TUBB2).